The following is a 306-amino-acid chain: MASNVTNKTDPRSMNSRVFIGNLNTLVVKKSDVEAIFSKYGKIVGCSVHKGFAFVQYVNERNARAAVAGEDGRMIAGQVLDINLAAEPKVNRGKAGVKRSAAEMYGSVTEHPSPSPLLSSSFDLDYDFQRDYYDRMYSYPARVPPPPPIARAVVPSKRQRVSGNTSRRGKSGFNSKSGQRGSSKSGKLKGDDLQAIKKELTQIKQKVDSLLENLEKIEKEQSKQAVEMKNDKSEEEQSSSSVKKDETNVKMESEGGADDSAEEGDLLDDDDNEDRGDDQLELIKDDEKEAEEGEDDRDSANGEDDS.

Residue A2 is modified to N-acetylalanine. Glycyl lysine isopeptide (Lys-Gly) (interchain with G-Cter in SUMO2) cross-links involve residues K8, K50, K89, and K94. One can recognise an RRM domain in the interval 16–87; it reads SRVFIGNLNT…QVLDINLAAE (72 aa). S107 and V108 each carry phosphoserine. T109 is subject to Phosphothreonine. A phosphoserine mark is found at S113, S115, and S121. 2 disordered regions span residues 139-190 and 221-306; these read YPAR…KLKG and QSKQ…EDDS. Residues 155 to 161 carry the Nuclear localization signal motif; it reads PSKRQRV. A phosphoserine mark is found at S162 and S166. The segment covering 175–185 has biased composition (low complexity); it reads SKSGQRGSSKS. K176 is subject to N6-acetyllysine; alternate. K176 is covalently cross-linked (Glycyl lysine isopeptide (Lys-Gly) (interchain with G-Cter in SUMO2); alternate). A coiled-coil region spans residues 190 to 238; the sequence is GDDLQAIKKELTQIKQKVDSLLENLEKIEKEQSKQAVEMKNDKSEEEQS. Basic and acidic residues predominate over residues 221 to 232; sequence QSKQAVEMKNDK. Residues K223 and K229 each participate in a glycyl lysine isopeptide (Lys-Gly) (interchain with G-Cter in SUMO2) cross-link. K232 is covalently cross-linked (Glycyl lysine isopeptide (Lys-Gly) (interchain with G-Cter in SUMO2); alternate). A Glycyl lysine isopeptide (Lys-Gly) (interchain with G-Cter in SUMO1); alternate cross-link involves residue K232. A phosphoserine mark is found at S233, S238, S239, and S241. Basic and acidic residues predominate over residues 242–253; sequence VKKDETNVKMES. Residues K243 and K244 each participate in a glycyl lysine isopeptide (Lys-Gly) (interchain with G-Cter in SUMO2) cross-link. K250 participates in a covalent cross-link: Glycyl lysine isopeptide (Lys-Gly) (interchain with G-Cter in SUMO2); alternate. K250 participates in a covalent cross-link: Glycyl lysine isopeptide (Lys-Gly) (interchain with G-Cter in SUMO); alternate. A phosphoserine mark is found at S253 and S260. The span at 255 to 276 shows a compositional bias: acidic residues; that stretch reads GGADDSAEEGDLLDDDDNEDRG. The segment covering 277–287 has biased composition (basic and acidic residues); it reads DDQLELIKDDE. Residues 288–306 are compositionally biased toward acidic residues; it reads KEAEEGEDDRDSANGEDDS. 2 positions are modified to phosphoserine: S299 and S306.

This sequence belongs to the RRM HNRPC family. RALY subfamily. As to quaternary structure, tetramer composed of 3 copies of isoform C1 and 1 copy of isoform C2. Assembly of 3 tetramers with bound pre-mRNA gives rise to a 19S complex that interacts with HNRNPA2B1 tetramers. Component of the 40S hnRNP particle. Identified in the spliceosome C complex. Interacts with IGF2BP1. Interacts with DHX9; this interaction is direct, enhanced probably by their concomitant binding to RNA and mediates the attachment to actin filaments. Interacts with PPIA/CYPA. Interacts with YWHAE. In terms of processing, phosphorylated on Ser-260 and Ser-299 in resting cells. Phosphorylated on Ser-253 and on 1 serine residue in the poly-Ser stretch at position 238 in response to hydrogen peroxide. Post-translationally, sumoylated. Sumoylation reduces affinity for mRNA. Ubiquitinated and degraded after nucleo-cytoplasmic transport by YWHAE.

It is found in the nucleus. Functionally, binds pre-mRNA and nucleates the assembly of 40S hnRNP particles. Interacts with poly-U tracts in the 3'-UTR or 5'-UTR of mRNA and modulates the stability and the level of translation of bound mRNA molecules. Single HNRNPC tetramers bind 230-240 nucleotides. Trimers of HNRNPC tetramers bind 700 nucleotides. May play a role in the early steps of spliceosome assembly and pre-mRNA splicing. N6-methyladenosine (m6A) has been shown to alter the local structure in mRNAs and long non-coding RNAs (lncRNAs) via a mechanism named 'm(6)A-switch', facilitating binding of HNRNPC, leading to regulation of mRNA splicing. In Homo sapiens (Human), this protein is Heterogeneous nuclear ribonucleoproteins C1/C2 (HNRNPC).